Here is a 638-residue protein sequence, read N- to C-terminus: UvrABC system protein C (638 aa).

The region spanning 20–97 (ECAGVYQMFD…IKKFQPKFNI (78 aa)) is the GIY-YIG domain. Positions 209–244 (KELQENLSKKMEELSSHMYFEEAAEIRDRIKALSYV) constitute a UVR domain.

This sequence belongs to the UvrC family. In terms of assembly, interacts with UvrB in an incision complex.

It localises to the cytoplasm. In terms of biological role, the UvrABC repair system catalyzes the recognition and processing of DNA lesions. UvrC both incises the 5' and 3' sides of the lesion. The N-terminal half is responsible for the 3' incision and the C-terminal half is responsible for the 5' incision. This is UvrABC system protein C from Rickettsia canadensis (strain McKiel).